The sequence spans 161 residues: Regulator of ribonuclease activity A (161 aa).

It belongs to the RraA family. In terms of assembly, homotrimer. Binds to both RNA-binding sites in the C-terminal region of Rne and to RhlB.

The protein resides in the cytoplasm. Globally modulates RNA abundance by binding to RNase E (Rne) and regulating its endonucleolytic activity. Can modulate Rne action in a substrate-dependent manner by altering the composition of the degradosome. Modulates RNA-binding and helicase activities of the degradosome. The polypeptide is Regulator of ribonuclease activity A (Cronobacter sakazakii (strain ATCC BAA-894) (Enterobacter sakazakii)).